The following is a 105-amino-acid chain: MTRDRPTLLARVLILPIRGYQRWISPLFPPVCRFYPSCSSYAVEALRVHGAGRGLWLTIRRLGKCHPFHPGGLDPVPPRRNESGTEISDARPGSDGEASPGAPGL.

Residues 68–105 form a disordered region; that stretch reads FHPGGLDPVPPRRNESGTEISDARPGSDGEASPGAPGL. Residues 77 to 94 show a composition bias toward basic and acidic residues; that stretch reads PPRRNESGTEISDARPGS.

Belongs to the UPF0161 family.

The protein resides in the cell membrane. Functionally, could be involved in insertion of integral membrane proteins into the membrane. This Thermobifida fusca (strain YX) protein is Putative membrane protein insertion efficiency factor.